The chain runs to 129 residues: Small ribosomal subunit protein uS11 (129 aa).

Belongs to the universal ribosomal protein uS11 family. In terms of assembly, part of the 30S ribosomal subunit. Interacts with proteins S7 and S18. Binds to IF-3.

Its function is as follows. Located on the platform of the 30S subunit, it bridges several disparate RNA helices of the 16S rRNA. Forms part of the Shine-Dalgarno cleft in the 70S ribosome. The chain is Small ribosomal subunit protein uS11 from Anoxybacillus flavithermus (strain DSM 21510 / WK1).